The chain runs to 356 residues: DNA polymerase IV (356 aa).

Residues 7–188 (IIHIDMDCFY…LPLKKIPRVG (182 aa)) form the UmuC domain. Residues Asp11 and Asp106 each contribute to the Mg(2+) site. Glu107 is a catalytic residue.

This sequence belongs to the DNA polymerase type-Y family. As to quaternary structure, monomer. Mg(2+) serves as cofactor.

It localises to the cytoplasm. It catalyses the reaction DNA(n) + a 2'-deoxyribonucleoside 5'-triphosphate = DNA(n+1) + diphosphate. Functionally, poorly processive, error-prone DNA polymerase involved in untargeted mutagenesis. Copies undamaged DNA at stalled replication forks, which arise in vivo from mismatched or misaligned primer ends. These misaligned primers can be extended by PolIV. Exhibits no 3'-5' exonuclease (proofreading) activity. May be involved in translesional synthesis, in conjunction with the beta clamp from PolIII. The protein is DNA polymerase IV of Actinobacillus pleuropneumoniae serotype 5b (strain L20).